The sequence spans 1685 residues: Phosphatidylinositol 4-phosphate 3-kinase C2 domain-containing subunit alpha (1685 aa).

Disordered regions lie at residues 1 to 33 (MAQI…EALQ) and 41 to 60 (KLQK…LSSS). N-acetylalanine is present on alanine 2. Positions 2 to 142 (AQISSNSGFK…FRPTIQRGQW (141 aa)) are interaction with clathrin; sufficient to induce clathrin assembly. The span at 19 to 31 (EPTRAKDVDKEEA) shows a compositional bias: basic and acidic residues. Polar residues predominate over residues 49–60 (TDNQRGFELSSS). Serine 60, serine 108, serine 259, serine 327, and serine 338 each carry phosphoserine. Residues 419-507 (NASVKVSIDI…DTEIRLQLLT (89 aa)) enclose the PI3K-RBD domain. At serine 628 the chain carries Phosphoserine. In terms of domain architecture, C2 PI3K-type spans 680 to 839 (TTEQLQFTIF…ERIVLQVDFP (160 aa)). Residues 859–1035 (QHNLETLEND…EHVLGALLSV (177 aa)) enclose the PIK helical domain. A PI3K/PI4K catalytic domain is found at 1103–1381 (SIKSCSFFSS…LIESSLGSIA (279 aa)). Positions 1109–1115 (FFSSNAV) are G-loop. The tract at residues 1245 to 1253 (GICDRHNDN) is catalytic loop. An activation loop region spans residues 1264-1290 (HIDFGKFLGHAQMFGTFKRDRAPFVLT). The 117-residue stretch at 1420–1536 (GRIKEVSVFT…TFFHPLLRDE (117 aa)) folds into the PX domain. The interval 1486–1491 (RMVLGR) is interaction with PtdIns(4,5)P2-containing membranes. The residue at position 1551 (serine 1551) is a Phosphoserine. In terms of domain architecture, C2 spans 1554–1677 (TPGQIGGAVK…NLSKETVKWY (124 aa)). Positions 1607–1618 (SKRKTKISRKTR) match the Nuclear localization signal motif.

Belongs to the PI3/PI4-kinase family. Part of a complex with ERBB2 and EGFR. Interacts with clathrin trimers. Interacts with SBF2/MTMR13. Requires Ca(2+) as cofactor. Mg(2+) serves as cofactor. In terms of processing, phosphorylated on Ser-259 during mitosis and upon UV irradiation; which does not change enzymatic activity but leads to proteasomal degradation. Phosphorylated upon insulin stimulation; which may lead to enzyme activation.

It is found in the cell membrane. Its subcellular location is the cytoplasmic vesicle. The protein resides in the clathrin-coated vesicle. The protein localises to the nucleus. It localises to the cytoplasm. It is found in the golgi apparatus. Its subcellular location is the trans-Golgi network. It carries out the reaction a 1,2-diacyl-sn-glycero-3-phospho-(1D-myo-inositol 4-phosphate) + ATP = a 1,2-diacyl-sn-glycero-3-phospho-(1D-myo-inositol-3,4-bisphosphate) + ADP + H(+). It catalyses the reaction a 1,2-diacyl-sn-glycero-3-phospho-(1D-myo-inositol) + ATP = a 1,2-diacyl-sn-glycero-3-phospho-(1D-myo-inositol-3-phosphate) + ADP + H(+). The catalysed reaction is a 1,2-diacyl-sn-glycero-3-phospho-(1D-myo-inositol-4,5-bisphosphate) + ATP = a 1,2-diacyl-sn-glycero-3-phospho-(1D-myo-inositol-3,4,5-trisphosphate) + ADP + H(+). Only slightly inhibited by wortmannin and LY294002. Activated by clathrin and insulin. In terms of biological role, generates phosphatidylinositol 3-phosphate (PtdIns3P) and phosphatidylinositol 3,4-bisphosphate (PtdIns(3,4)P2) that act as second messengers. Has a role in several intracellular trafficking events. Functions in insulin signaling and secretion. Required for translocation of the glucose transporter SLC2A4/GLUT4 to the plasma membrane and glucose uptake in response to insulin-mediated RHOQ activation. Regulates insulin secretion through two different mechanisms: involved in glucose-induced insulin secretion downstream of insulin receptor in a pathway that involves AKT1 activation and TBC1D4/AS160 phosphorylation, and participates in the late step of insulin granule exocytosis probably in insulin granule fusion. Synthesizes PtdIns3P in response to insulin signaling. Functions in clathrin-coated endocytic vesicle formation and distribution. Regulates dynamin-independent endocytosis, probably by recruiting EEA1 to internalizing vesicles. In neurosecretory cells synthesizes PtdIns3P on large dense core vesicles. Participates in calcium induced contraction of vascular smooth muscle by regulating myosin light chain (MLC) phosphorylation through a mechanism involving Rho kinase-dependent phosphorylation of the MLCP-regulatory subunit MYPT1. May play a role in the EGF signaling cascade. May be involved in mitosis and UV-induced damage response. Required for maintenance of normal renal structure and function by supporting normal podocyte function. Involved in the regulation of ciliogenesis and trafficking of ciliary components. The chain is Phosphatidylinositol 4-phosphate 3-kinase C2 domain-containing subunit alpha (PIK3C2A) from Pongo abelii (Sumatran orangutan).